Here is a 78-residue protein sequence, read N- to C-terminus: Large ribosomal subunit protein uL29 (78 aa).

This sequence belongs to the universal ribosomal protein uL29 family.

This chain is Large ribosomal subunit protein uL29, found in Salinispora arenicola (strain CNS-205).